Here is a 326-residue protein sequence, read N- to C-terminus: Protein SEH1 (326 aa).

WD repeat units follow at residues 7–46 (TLDSGTTCSSWNQSGDRLAAGSLNGKLSIYESSTSSSSTF), 54–95 (VSES…AHGL), 105–146 (NKSS…ELKN), 224–266 (DKGD…DLEG), and 278–317 (GHQGEVWQMEWDMSGMTLASTGSDGMVKLWQSNLNGEWHE).

The protein belongs to the WD repeat SEC13 family. Part of the nuclear pore complex (NPC). The NPC has an eight-fold symmetrical structure comprising a central transport channel and two rings, the cytoplasmic and nuclear rings, to which eight filaments are attached. The cytoplasmic filaments have loose ends, while the nuclear filaments are joined in a distal ring, forming a nuclear basket. NPCs are highly dynamic in configuration and composition, and can be devided in 3 subcomplexes, the NUP62 subcomplex, the NUP107-160 subcomplex and the NUP93 subcomplex, containing approximately 30 different nucleoporin proteins.

It localises to the nucleus envelope. The protein resides in the nucleus. The protein localises to the cytoplasm. It is found in the nuclear pore complex. Required for proper export of mRNAs from the nucleus to the cytoplasm. This Arabidopsis thaliana (Mouse-ear cress) protein is Protein SEH1.